Here is a 156-residue protein sequence, read N- to C-terminus: Ribosomal RNA large subunit methyltransferase H (156 aa).

S-adenosyl-L-methionine is bound by residues leucine 73, glycine 104, and 123–128 (IGPLTL).

The protein belongs to the RNA methyltransferase RlmH family. In terms of assembly, homodimer.

The protein resides in the cytoplasm. It carries out the reaction pseudouridine(1915) in 23S rRNA + S-adenosyl-L-methionine = N(3)-methylpseudouridine(1915) in 23S rRNA + S-adenosyl-L-homocysteine + H(+). Specifically methylates the pseudouridine at position 1915 (m3Psi1915) in 23S rRNA. In Xanthomonas oryzae pv. oryzae (strain MAFF 311018), this protein is Ribosomal RNA large subunit methyltransferase H.